We begin with the raw amino-acid sequence, 1079 residues long: Capping protein inhibiting regulator of actin dynamics (1079 aa).

Over residues 1–11 the composition is skewed to basic and acidic residues; sequence MSQENVSDKVR. 7 disordered regions span residues 1–293, 308–327, 341–383, 420–453, 493–522, 606–639, and 658–1054; these read MSQE…EEER, ERKR…AEKR, EHRI…EWKR, PVTP…PTLS, EGKK…VFES, IFGQ…VQSR, and PSFL…TTQV. Acidic residues predominate over residues 36 to 45; it reads DEGSSDEEEV. Residues 64–76 are compositionally biased toward basic and acidic residues; that stretch reads SAKEKSVSHDTVQ. A compositionally biased stretch (basic residues) spans 115–134; that stretch reads AKHKLSVKPKNQRVSRKHRR. A compositionally biased stretch (acidic residues) spans 140-158; that stretch reads HEDDFSEIQEEFEKDEEVF. Over residues 159–293 the composition is skewed to basic and acidic residues; sequence DSSREDYGII…EERKRAEEER (135 aa). Residues 420-434 show a composition bias toward polar residues; the sequence is PVTPATGQQGETTAE. The span at 670-682 shows a compositional bias: polar residues; that stretch reads PKSQRSESGSPIQ. A compositionally biased stretch (acidic residues) spans 684–695; it reads ESEDSDTKDEDG. Polar residues predominate over residues 756 to 781; the sequence is DNSTLSEKSSPISPQQENIEFQTTVA. 2 stretches are compositionally biased toward basic and acidic residues: residues 896-930 and 944-983; these read WREK…DKET and GFRE…EDKG. Residues 984-993 show a composition bias toward polar residues; it reads NGSSSIISKH. Residues 994–1016 show a composition bias toward basic and acidic residues; it reads QTADENKRPDTLLARFERRDNLK. Over residues 1020–1033 the composition is skewed to polar residues; it reads TLPSSVTVEITDST.

Directly interacts with actin-capping proteins; this interaction decreases the binding of capping proteins to actin.

It is found in the cytoplasm. The protein localises to the cytosol. In terms of biological role, involved in epithelial cell integrity by acting on the maintenance of the actin cytoskeleton. Positively regulates the actin polymerization, by inhibiting the interaction of actin-capping proteins with actin. The protein is Capping protein inhibiting regulator of actin dynamics (crad) of Danio rerio (Zebrafish).